Here is a 556-residue protein sequence, read N- to C-terminus: Mitochondrial distribution and morphology protein 34-2 (556 aa).

One can recognise an SMP-LTD domain in the interval 1 to 195 (MAFNFNWSPL…LPAIIHRLSL (195 aa)). Disordered regions lie at residues 206–239 (EEMN…DSLG), 299–423 (TDTS…PVTP), and 440–473 (HLPS…DATP). Residues 299-333 (TDTSEFPSSVISPLSPTLSREQSQMGSMSSLHETA) are compositionally biased toward polar residues. Low complexity predominate over residues 334–357 (SNASMQSRPSMSSHSFSTSTYGLS). Residues 362 to 374 (RHSKAHARKRKKR) are compositionally biased toward basic residues. Residues 375–385 (VVDLRRPKTTD) are compositionally biased toward basic and acidic residues. Polar residues predominate over residues 391–402 (SDESVMTESSRP). Basic and acidic residues predominate over residues 459-468 (ETIRGPKAED).

The protein belongs to the MDM34 family. Component of the ER-mitochondria encounter structure (ERMES) or MDM complex, composed of mmm1, mdm10, mdm12 and mdm34.

The protein resides in the mitochondrion outer membrane. In terms of biological role, component of the ERMES/MDM complex, which serves as a molecular tether to connect the endoplasmic reticulum (ER) and mitochondria. Components of this complex are involved in the control of mitochondrial shape and protein biogenesis, and function in nonvesicular lipid trafficking between the ER and mitochondria. Mdm34 is required for the interaction of the ER-resident membrane protein mmm1 and the outer mitochondrial membrane-resident beta-barrel protein mdm10. The chain is Mitochondrial distribution and morphology protein 34-2 from Penicillium rubens (strain ATCC 28089 / DSM 1075 / NRRL 1951 / Wisconsin 54-1255) (Penicillium chrysogenum).